The following is a 186-amino-acid chain: Crossover junction endodeoxyribonuclease RuvC (186 aa).

Residues Asp-7, Glu-67, and Asp-140 contribute to the active site. The Mg(2+) site is built by Asp-7, Glu-67, and Asp-140.

This sequence belongs to the RuvC family. In terms of assembly, homodimer which binds Holliday junction (HJ) DNA. The HJ becomes 2-fold symmetrical on binding to RuvC with unstacked arms; it has a different conformation from HJ DNA in complex with RuvA. In the full resolvosome a probable DNA-RuvA(4)-RuvB(12)-RuvC(2) complex forms which resolves the HJ. Mg(2+) serves as cofactor.

The protein resides in the cytoplasm. It catalyses the reaction Endonucleolytic cleavage at a junction such as a reciprocal single-stranded crossover between two homologous DNA duplexes (Holliday junction).. In terms of biological role, the RuvA-RuvB-RuvC complex processes Holliday junction (HJ) DNA during genetic recombination and DNA repair. Endonuclease that resolves HJ intermediates. Cleaves cruciform DNA by making single-stranded nicks across the HJ at symmetrical positions within the homologous arms, yielding a 5'-phosphate and a 3'-hydroxyl group; requires a central core of homology in the junction. The consensus cleavage sequence is 5'-(A/T)TT(C/G)-3'. Cleavage occurs on the 3'-side of the TT dinucleotide at the point of strand exchange. HJ branch migration catalyzed by RuvA-RuvB allows RuvC to scan DNA until it finds its consensus sequence, where it cleaves and resolves the cruciform DNA. This chain is Crossover junction endodeoxyribonuclease RuvC, found in Chloroherpeton thalassium (strain ATCC 35110 / GB-78).